Reading from the N-terminus, the 103-residue chain is Large ribosomal subunit protein bL25 (103 aa).

This sequence belongs to the bacterial ribosomal protein bL25 family. As to quaternary structure, part of the 50S ribosomal subunit; part of the 5S rRNA/L5/L18/L25 subcomplex. Contacts the 5S rRNA. Binds to the 5S rRNA independently of L5 and L18.

This is one of the proteins that binds to the 5S RNA in the ribosome where it forms part of the central protuberance. This Blochmanniella floridana protein is Large ribosomal subunit protein bL25.